A 120-amino-acid chain; its full sequence is MVSSKDIIQRRALRVRRRIKMVSHDRPRLSVYRSNQNIYAQIIDDSRGCTLVSASTLEGDLKKSLKSGSDKQAAFAVGKLIAERAKKAGVNEVVFDRGAYVYHGRVKALAEAAREGGLNF.

Belongs to the universal ribosomal protein uL18 family. Part of the 50S ribosomal subunit; part of the 5S rRNA/L5/L18/L25 subcomplex. Contacts the 5S and 23S rRNAs.

In terms of biological role, this is one of the proteins that bind and probably mediate the attachment of the 5S RNA into the large ribosomal subunit, where it forms part of the central protuberance. This Bartonella quintana (strain Toulouse) (Rochalimaea quintana) protein is Large ribosomal subunit protein uL18.